We begin with the raw amino-acid sequence, 304 residues long: D-alanine--D-alanine ligase (304 aa).

An ATP-grasp domain is found at 101–298; the sequence is KKIFIKNKIL…FIKLIEWILK (198 aa). 131 to 184 provides a ligand contact to ATP; that stretch reads EKNLKFPVVVKPINEGSSVHVYICDKTNILKNLKVLKSYNEILIEEFIPGREIQ. Residues aspartate 253, glutamate 265, and asparagine 267 each contribute to the Mg(2+) site.

It belongs to the D-alanine--D-alanine ligase family. It depends on Mg(2+) as a cofactor. Requires Mn(2+) as cofactor.

It is found in the cytoplasm. It catalyses the reaction 2 D-alanine + ATP = D-alanyl-D-alanine + ADP + phosphate + H(+). The protein operates within cell wall biogenesis; peptidoglycan biosynthesis. In terms of biological role, cell wall formation. This Pelagibacter ubique (strain HTCC1062) protein is D-alanine--D-alanine ligase.